The primary structure comprises 127 residues: Ribonuclease P protein component (127 aa).

This sequence belongs to the RnpA family. In terms of assembly, consists of a catalytic RNA component (M1 or rnpB) and a protein subunit.

It carries out the reaction Endonucleolytic cleavage of RNA, removing 5'-extranucleotides from tRNA precursor.. Functionally, RNaseP catalyzes the removal of the 5'-leader sequence from pre-tRNA to produce the mature 5'-terminus. It can also cleave other RNA substrates such as 4.5S RNA. The protein component plays an auxiliary but essential role in vivo by binding to the 5'-leader sequence and broadening the substrate specificity of the ribozyme. The chain is Ribonuclease P protein component from Synechococcus sp. (strain RCC307).